We begin with the raw amino-acid sequence, 230 residues long: Proteasome subunit alpha (230 aa).

This sequence belongs to the peptidase T1A family. As to quaternary structure, the 20S proteasome core is composed of 14 alpha and 14 beta subunits that assemble into four stacked heptameric rings, resulting in a barrel-shaped structure. The two inner rings, each composed of seven catalytic beta subunits, are sandwiched by two outer rings, each composed of seven alpha subunits. The catalytic chamber with the active sites is on the inside of the barrel. Has a gated structure, the ends of the cylinder being occluded by the N-termini of the alpha-subunits. Is capped by the proteasome-associated ATPase, ARC.

Its subcellular location is the cytoplasm. It functions in the pathway protein degradation; proteasomal Pup-dependent pathway. Its activity is regulated as follows. The formation of the proteasomal ATPase ARC-20S proteasome complex, likely via the docking of the C-termini of ARC into the intersubunit pockets in the alpha-rings, may trigger opening of the gate for substrate entry. Interconversion between the open-gate and close-gate conformations leads to a dynamic regulation of the 20S proteasome proteolysis activity. In terms of biological role, component of the proteasome core, a large protease complex with broad specificity involved in protein degradation. This is Proteasome subunit alpha from Thermomonospora curvata (strain ATCC 19995 / DSM 43183 / JCM 3096 / KCTC 9072 / NBRC 15933 / NCIMB 10081 / Henssen B9).